The primary structure comprises 29 residues: Cytochrome b6-f complex subunit 8 (29 aa).

The helical transmembrane segment at 3 to 23 (IVSFAWAALMVVFTFSLSLVV) threads the bilayer.

This sequence belongs to the PetN family. As to quaternary structure, the 4 large subunits of the cytochrome b6-f complex are cytochrome b6, subunit IV (17 kDa polypeptide, PetD), cytochrome f and the Rieske protein, while the 4 small subunits are PetG, PetL, PetM and PetN. The complex functions as a dimer.

It localises to the plastid. It is found in the chloroplast thylakoid membrane. Component of the cytochrome b6-f complex, which mediates electron transfer between photosystem II (PSII) and photosystem I (PSI), cyclic electron flow around PSI, and state transitions. This is Cytochrome b6-f complex subunit 8 from Phalaenopsis aphrodite subsp. formosana (Moth orchid).